We begin with the raw amino-acid sequence, 288 residues long: Sulfur carrier protein FdhD (288 aa).

A disordered region spans residues 1 to 23 (MMRCMQSPEVHPAAAGDAEPPTH). Cys127 acts as the Cysteine persulfide intermediate in catalysis.

It belongs to the FdhD family.

It is found in the cytoplasm. In terms of biological role, required for formate dehydrogenase (FDH) activity. Acts as a sulfur carrier protein that transfers sulfur from IscS to the molybdenum cofactor prior to its insertion into FDH. The protein is Sulfur carrier protein FdhD of Cupriavidus necator (strain ATCC 17699 / DSM 428 / KCTC 22496 / NCIMB 10442 / H16 / Stanier 337) (Ralstonia eutropha).